We begin with the raw amino-acid sequence, 461 residues long: MLKIFNTLSRQKEEFKPIHPGKVGMYVCGITIYDLCHIGHGRTFVSFDVVARYLRYLGYDLTYVRNVTDVDDKIIKRAAENSESCDDLTGRMLAEMYKDFDALNILRPDLEPRATRHIQEIIALTESLIKRGHAYVADNGDVMFSVESDQDYGLLSRQDLSQLQAGARVEVADVKRNPMDFVLWKMSKPGEPSWESPWGAGRPGWHIECSAMNSKQLGNHFDIHGGGADLMFPHHENEIAQSTCAHDGPYVNYWMHSGMVMVDKEKMSKSLNNFFTIRDVLAYYDAETVRYFLLSGHYRSQLNYTEDNLKQARTALERFYTALRGTDASVPPAGGEIFEARFIDAMNDDFNTPEAYSVLFDMVREINRLKSEDMDAANGLAAELRKLAGILGLLQQQPEQFLHRGIQADDEEIAKIEALIKQRNDARKNKDWPLADSARNQLNEMGIELEDGPQGTSWRRK.

Position 28 (C28) interacts with Zn(2+). The 'HIGH' region motif lies at 30-40 (ITIYDLCHIGH). Zn(2+) contacts are provided by C209, H234, and E238. A 'KMSKS' region motif is present at residues 266-270 (KMSKS). K269 contacts ATP.

This sequence belongs to the class-I aminoacyl-tRNA synthetase family. In terms of assembly, monomer. Requires Zn(2+) as cofactor.

It is found in the cytoplasm. It carries out the reaction tRNA(Cys) + L-cysteine + ATP = L-cysteinyl-tRNA(Cys) + AMP + diphosphate. The chain is Cysteine--tRNA ligase from Photorhabdus laumondii subsp. laumondii (strain DSM 15139 / CIP 105565 / TT01) (Photorhabdus luminescens subsp. laumondii).